Consider the following 155-residue polypeptide: Small ribosomal subunit protein uS7cz/uS7cy (155 aa).

Belongs to the universal ribosomal protein uS7 family. As to quaternary structure, part of the 30S ribosomal subunit.

It is found in the plastid. The protein localises to the chloroplast. Functionally, one of the primary rRNA binding proteins, it binds directly to 16S rRNA where it nucleates assembly of the head domain of the 30S subunit. The sequence is that of Small ribosomal subunit protein uS7cz/uS7cy (rps7-A) from Phalaenopsis aphrodite subsp. formosana (Moth orchid).